A 236-amino-acid chain; its full sequence is Small ribosomal subunit protein uS3 (236 aa).

A KH type-2 domain is found at 39 to 107 (IRKFLKREMY…EVFINIKEAK (69 aa)). Residues 214–229 (PEKKEESKSGDKEVRS) are compositionally biased toward basic and acidic residues. Residues 214–236 (PEKKEESKSGDKEVRSKSRRGRQ) form a disordered region.

It belongs to the universal ribosomal protein uS3 family. Part of the 30S ribosomal subunit. Forms a tight complex with proteins S10 and S14.

Functionally, binds the lower part of the 30S subunit head. Binds mRNA in the 70S ribosome, positioning it for translation. The chain is Small ribosomal subunit protein uS3 from Helicobacter hepaticus (strain ATCC 51449 / 3B1).